Here is a 114-residue protein sequence, read N- to C-terminus: Non-specific lipid-transfer protein 1 (114 aa).

Positions 1 to 23 (MEIAGKIACFVVLCMVVAAPCAE) are cleaved as a signal peptide. 4 disulfides stabilise this stretch: C27–C73, C37–C50, C51–C96, and C71–C110.

It belongs to the plant LTP family. As to expression, high expression in leaf epidermis and shoot apex, and also in root epidermis during seedling germination.

Its function is as follows. Plant non-specific lipid-transfer proteins transfer phospholipids as well as galactolipids across membranes. Binds cis-unsaturated fatty acids and jasmonic acid with a higher affinity than linear chain fatty acids. Formation of the complex with jasmonic acid results in a conformational change facilitating the LPT1 binding on the elicitin plasma membrane receptor that is known to be involved in plant defense induction. May also play a role in wax or cutin deposition in the cell walls of expanding epidermal cells and certain secretory tissues. The polypeptide is Non-specific lipid-transfer protein 1 (LTP1) (Nicotiana tabacum (Common tobacco)).